The following is a 415-amino-acid chain: ATP-dependent Clp protease ATP-binding subunit ClpX (415 aa).

One can recognise a ClpX-type ZB domain in the interval 1–52 (MAESKNNKKRCSFCGRSENEVGFLITGMNGYICDSCATQAYEITQEAMGAGK). Zn(2+)-binding residues include Cys11, Cys14, Cys33, and Cys36. An ATP-binding site is contributed by 121 to 128 (STGTGKTL).

This sequence belongs to the ClpX chaperone family. As to quaternary structure, component of the ClpX-ClpP complex. Forms a hexameric ring that, in the presence of ATP, binds to fourteen ClpP subunits assembled into a disk-like structure with a central cavity, resembling the structure of eukaryotic proteasomes.

Its function is as follows. ATP-dependent specificity component of the Clp protease. It directs the protease to specific substrates. Can perform chaperone functions in the absence of ClpP. This chain is ATP-dependent Clp protease ATP-binding subunit ClpX, found in Bacteroides fragilis (strain ATCC 25285 / DSM 2151 / CCUG 4856 / JCM 11019 / LMG 10263 / NCTC 9343 / Onslow / VPI 2553 / EN-2).